Here is a 361-residue protein sequence, read N- to C-terminus: Versatile peroxidase VPL2 (361 aa).

A signal peptide spans 1–22; that stretch reads MSFKTLSALALALGAAVQFASA. A propeptide spanning residues 23–30 is cleaved from the precursor; it reads AVPLVQKR. Intrachain disulfides connect cysteine 33–cysteine 45, cysteine 44–cysteine 308, cysteine 64–cysteine 144, and cysteine 272–cysteine 337. Mn(2+)-binding residues include glutamate 66 and glutamate 70. Histidine 77 acts as the Proton acceptor in catalysis. Aspartate 78, glycine 90, aspartate 92, and serine 94 together coordinate Ca(2+). A glycan (N-linked (GlcNAc...) asparagine) is linked at asparagine 126. Tryptophan 194 acts as the Tryptophan radical intermediate in catalysis. Residue histidine 199 coordinates heme b. Serine 200 provides a ligand contact to Ca(2+). A heme b-binding site is contributed by 203–207; the sequence is AADKV. Aspartate 205 is a binding site for Mn(2+). Ca(2+)-binding residues include aspartate 217, threonine 219, valine 222, and aspartate 224.

It belongs to the peroxidase family. Ligninase subfamily. Heme b is required as a cofactor. It depends on Ca(2+) as a cofactor.

The protein resides in the secreted. The enzyme catalyses 1-(4-hydroxy-3-methoxyphenyl)-2-(2-methoxyphenoxy)propane-1,3-diol + H2O2 = guaiacol + vanillin + glycolaldehyde + H2O. It catalyses the reaction 2 Mn(2+) + H2O2 + 2 H(+) = 2 Mn(3+) + 2 H2O. Functionally, a versatile ligninolytic peroxidase that combines the substrate specificity characteristics of the two other ligninolytic peroxidases, manganese peroxidase and lignin peroxidase. The chain is Versatile peroxidase VPL2 (vpl2) from Pleurotus eryngii (Boletus of the steppes).